Here is a 261-residue protein sequence, read N- to C-terminus: NAD-capped RNA hydrolase NudC (261 aa).

Positions 25 and 69 each coordinate substrate. Residues Cys-98 and Cys-101 each contribute to the Zn(2+) site. A substrate-binding site is contributed by Glu-111. Residues Cys-116 and Cys-119 each coordinate Zn(2+). Substrate is bound at residue Tyr-124. A Nudix hydrolase domain is found at 125-248 (PQIAPCVIVA…TVARRLIEDT (124 aa)). A divalent metal cation contacts are provided by Ala-158, Glu-174, and Glu-178. Residues 159–180 (GFVEVGETLEQAVSREVLEESN) carry the Nudix box motif. Residue 192 to 199 (QPWPFPHS) coordinates substrate. Residue Glu-219 participates in a divalent metal cation binding. Ala-241 contributes to the substrate binding site.

The protein belongs to the Nudix hydrolase family. NudC subfamily. Homodimer. Requires Mg(2+) as cofactor. The cofactor is Mn(2+). It depends on Zn(2+) as a cofactor.

The enzyme catalyses a 5'-end NAD(+)-phospho-ribonucleoside in mRNA + H2O = a 5'-end phospho-adenosine-phospho-ribonucleoside in mRNA + beta-nicotinamide D-ribonucleotide + 2 H(+). The catalysed reaction is NAD(+) + H2O = beta-nicotinamide D-ribonucleotide + AMP + 2 H(+). It carries out the reaction NADH + H2O = reduced beta-nicotinamide D-ribonucleotide + AMP + 2 H(+). Its function is as follows. mRNA decapping enzyme that specifically removes the nicotinamide adenine dinucleotide (NAD) cap from a subset of mRNAs by hydrolyzing the diphosphate linkage to produce nicotinamide mononucleotide (NMN) and 5' monophosphate mRNA. The NAD-cap is present at the 5'-end of some mRNAs and stabilizes RNA against 5'-processing. Has preference for mRNAs with a 5'-end purine. Catalyzes the hydrolysis of a broad range of dinucleotide pyrophosphates. This Yersinia enterocolitica serotype O:8 / biotype 1B (strain NCTC 13174 / 8081) protein is NAD-capped RNA hydrolase NudC.